A 395-amino-acid chain; its full sequence is Protein SGT1 (395 aa).

Lys-32 is covalently cross-linked (Glycyl lysine isopeptide (Lys-Gly) (interchain with G-Cter in ubiquitin)). A disordered region spans residues 137 to 175 (KKNKKQKDSTNKHTIKPVESIENRGDNNSSHSPISPLKI). Phosphoserine occurs at positions 168 and 171. In terms of domain architecture, CS spans 182 to 277 (SPKFKIDWYQ…IDSTQWKKLE (96 aa)). In terms of domain architecture, SGS spans 312 to 395 (SYPSSSKKKI…PPEGMEPKHW (84 aa)). The tract at residues 373-395 (DWEDVSKGTVKTSPPEGMEPKHW) is disordered.

The protein belongs to the SGT1 family. Interacts with SKP1/CBF3D. Part of SCF E3 ubiquitin ligase complexes containing SKP1, CDC53, HRT1 and some F-box proteins. Interacts with CIR1/CDC35.

Involved in ubiquitination and subsequent proteasomal degradation of target proteins. Required for both entry into S phase and kinetochore function. Also involved in cyclic AMP (cAMP) pathway, possibly by participating in the assembly or the conformational activation of specific multiprotein complexes. The sequence is that of Protein SGT1 from Saccharomyces cerevisiae (strain ATCC 204508 / S288c) (Baker's yeast).